The sequence spans 393 residues: Lipid-A-disaccharide synthase (393 aa).

This sequence belongs to the LpxB family.

It carries out the reaction a lipid X + a UDP-2-N,3-O-bis[(3R)-3-hydroxyacyl]-alpha-D-glucosamine = a lipid A disaccharide + UDP + H(+). The protein operates within bacterial outer membrane biogenesis; LPS lipid A biosynthesis. Its function is as follows. Condensation of UDP-2,3-diacylglucosamine and 2,3-diacylglucosamine-1-phosphate to form lipid A disaccharide, a precursor of lipid A, a phosphorylated glycolipid that anchors the lipopolysaccharide to the outer membrane of the cell. This chain is Lipid-A-disaccharide synthase, found in Colwellia psychrerythraea (strain 34H / ATCC BAA-681) (Vibrio psychroerythus).